We begin with the raw amino-acid sequence, 250 residues long: 5-oxoprolinase subunit A (250 aa).

This sequence belongs to the LamB/PxpA family. In terms of assembly, forms a complex composed of PxpA, PxpB and PxpC.

The catalysed reaction is 5-oxo-L-proline + ATP + 2 H2O = L-glutamate + ADP + phosphate + H(+). Functionally, catalyzes the cleavage of 5-oxoproline to form L-glutamate coupled to the hydrolysis of ATP to ADP and inorganic phosphate. This Staphylococcus aureus (strain NCTC 8325 / PS 47) protein is 5-oxoprolinase subunit A.